Consider the following 381-residue polypeptide: Pyrimidine monooxygenase RutA (381 aa).

FMN contacts are provided by residues 66-67 (IK), Asn-132, Glu-141, 157-158 (RY), and Ser-207.

This sequence belongs to the NtaA/SnaA/DszA monooxygenase family. RutA subfamily.

The catalysed reaction is uracil + FMNH2 + NADH + O2 = (Z)-3-ureidoacrylate + FMN + NAD(+) + H2O + H(+). The enzyme catalyses thymine + FMNH2 + NADH + O2 = (Z)-2-methylureidoacrylate + FMN + NAD(+) + H2O + H(+). Catalyzes the pyrimidine ring opening between N-3 and C-4 by an unusual flavin hydroperoxide-catalyzed mechanism, adding oxygen atoms in the process to yield ureidoacrylate peracid, that immediately reacts with FMN forming ureidoacrylate and FMN-N(5)-oxide. The FMN-N(5)-oxide reacts spontaneously with NADH to produce FMN. Requires the flavin reductase RutF to regenerate FMN in vivo. This chain is Pyrimidine monooxygenase RutA, found in Methylobacterium radiotolerans (strain ATCC 27329 / DSM 1819 / JCM 2831 / NBRC 15690 / NCIMB 10815 / 0-1).